The following is a 140-amino-acid chain: Cytochrome c-type biogenesis protein CcmE (140 aa).

Topologically, residues 1-7 are cytoplasmic; that stretch reads MKRKHKR. Residues 8 to 28 traverse the membrane as a helical; Signal-anchor for type II membrane protein segment; the sequence is LLFVLASFCAAGCALLFILSE. Residues 29–140 lie on the Periplasmic side of the membrane; the sequence is LRESVSFFYT…TIPKALPEPK (112 aa). The heme site is built by His121 and Tyr125.

Belongs to the CcmE/CycJ family.

It localises to the cell inner membrane. Functionally, heme chaperone required for the biogenesis of c-type cytochromes. Transiently binds heme delivered by CcmC and transfers the heme to apo-cytochromes in a process facilitated by CcmF and CcmH. This is Cytochrome c-type biogenesis protein CcmE from Anaplasma marginale (strain Florida).